Consider the following 59-residue polypeptide: Insertion element IS986 uncharacterized 6.6 kDa protein (59 aa).

The tract at residues 1–26 is disordered; sequence MRKWVRQAQVDAGARPGTTTEESAEI.

This sequence belongs to the transposase 8 family.

The sequence is that of Insertion element IS986 uncharacterized 6.6 kDa protein from Mycobacterium tuberculosis.